Consider the following 357-residue polypeptide: UDP-N-acetylglucosamine--N-acetylmuramyl-(pentapeptide) pyrophosphoryl-undecaprenol N-acetylglucosamine transferase (357 aa).

UDP-N-acetyl-alpha-D-glucosamine is bound by residues 10-12 (TGG), Asn-124, Ser-189, Ile-244, and Gln-289.

Belongs to the glycosyltransferase 28 family. MurG subfamily.

It localises to the cell membrane. It carries out the reaction Mur2Ac(oyl-L-Ala-gamma-D-Glu-L-Lys-D-Ala-D-Ala)-di-trans,octa-cis-undecaprenyl diphosphate + UDP-N-acetyl-alpha-D-glucosamine = beta-D-GlcNAc-(1-&gt;4)-Mur2Ac(oyl-L-Ala-gamma-D-Glu-L-Lys-D-Ala-D-Ala)-di-trans,octa-cis-undecaprenyl diphosphate + UDP + H(+). It participates in cell wall biogenesis; peptidoglycan biosynthesis. Cell wall formation. Catalyzes the transfer of a GlcNAc subunit on undecaprenyl-pyrophosphoryl-MurNAc-pentapeptide (lipid intermediate I) to form undecaprenyl-pyrophosphoryl-MurNAc-(pentapeptide)GlcNAc (lipid intermediate II). This is UDP-N-acetylglucosamine--N-acetylmuramyl-(pentapeptide) pyrophosphoryl-undecaprenol N-acetylglucosamine transferase from Lactococcus lactis subsp. cremoris (strain MG1363).